The chain runs to 390 residues: Leu/Ile/Val-binding protein homolog 6 (390 aa).

Positions 1 to 21 (MKKIALTALAVFSLAASAAYA) are cleaved as a signal peptide.

It belongs to the leucine-binding protein family.

Functionally, component of an amino-acid transport system. The polypeptide is Leu/Ile/Val-binding protein homolog 6 (Brucella suis biovar 1 (strain 1330)).